Reading from the N-terminus, the 379-residue chain is Lipoyl synthase 2, mitochondrial (379 aa).

[4Fe-4S] cluster is bound by residues Cys106, Cys111, Cys117, Cys137, Cys141, Cys144, and Ser352. Residues 122–341 (EHGTQTATIM…EERGNELGFL (220 aa)) enclose the Radical SAM core domain.

Belongs to the radical SAM superfamily. Lipoyl synthase family. The cofactor is [4Fe-4S] cluster.

The protein resides in the mitochondrion. The catalysed reaction is [[Fe-S] cluster scaffold protein carrying a second [4Fe-4S](2+) cluster] + N(6)-octanoyl-L-lysyl-[protein] + 2 oxidized [2Fe-2S]-[ferredoxin] + 2 S-adenosyl-L-methionine + 4 H(+) = [[Fe-S] cluster scaffold protein] + N(6)-[(R)-dihydrolipoyl]-L-lysyl-[protein] + 4 Fe(3+) + 2 hydrogen sulfide + 2 5'-deoxyadenosine + 2 L-methionine + 2 reduced [2Fe-2S]-[ferredoxin]. It participates in protein modification; protein lipoylation via endogenous pathway; protein N(6)-(lipoyl)lysine from octanoyl-[acyl-carrier-protein]: step 2/2. Catalyzes the radical-mediated insertion of two sulfur atoms into the C-6 and C-8 positions of the octanoyl moiety bound to the lipoyl domains of lipoate-dependent enzymes, thereby converting the octanoylated domains into lipoylated derivatives. The sequence is that of Lipoyl synthase 2, mitochondrial from Drosophila yakuba (Fruit fly).